Here is a 1040-residue protein sequence, read N- to C-terminus: Multidrug resistance protein MdtB (1040 aa).

12 helical membrane passes run 25–45, 347–367, 369–389, 396–416, 440–460, 472–492, 537–557, 863–883, 888–908, 910–930, 968–988, and 998–1018; these read LLMAAILLAGIIGYRFLPVAA, LMLAIALVVMIIYLFLRNIPA, IIPGVAVPLSLIGTFAVMVFL, LTLMALTIATGFVVDDAIVVI, IGFTIISLTFSLIAVLIPLLF, FAVTLAVAILISAVVSLTLTP, WLTLSVAFATLLLSVMLWIVI, LGSTVWLIVAAVVAMYIVLGV, FIHPITILSTLPTAGVGALLA, IIAGSELDIIAIIGIILLIGI, ILMTTLAALLGALPLMLSTGV, and IAMVGGLLVSQVLTLFTTPVI.

This sequence belongs to the resistance-nodulation-cell division (RND) (TC 2.A.6) family. MdtB subfamily. As to quaternary structure, part of a tripartite efflux system composed of MdtA, MdtB and MdtC. MdtB forms a heteromultimer with MdtC.

It localises to the cell inner membrane. The chain is Multidrug resistance protein MdtB from Salmonella schwarzengrund (strain CVM19633).